A 120-amino-acid chain; its full sequence is MARISGVDLPKKKRIEYGLTYVYGIGLHASRKILDATGIDYNKRVYELNEDDIAAITKEIRASHVVEGDLRKQVAMDIKALMDLGSYRGLRHRRGLPCRGQKTKTNARTRKGKRKTVGAA.

A disordered region spans residues 93–120 (RRGLPCRGQKTKTNARTRKGKRKTVGAA).

It belongs to the universal ribosomal protein uS13 family. Part of the 30S ribosomal subunit. Forms a loose heterodimer with protein S19. Forms two bridges to the 50S subunit in the 70S ribosome.

In terms of biological role, located at the top of the head of the 30S subunit, it contacts several helices of the 16S rRNA. In the 70S ribosome it contacts the 23S rRNA (bridge B1a) and protein L5 of the 50S subunit (bridge B1b), connecting the 2 subunits; these bridges are implicated in subunit movement. Contacts the tRNAs in the A and P-sites. This is Small ribosomal subunit protein uS13 from Sulfurimonas denitrificans (strain ATCC 33889 / DSM 1251) (Thiomicrospira denitrificans (strain ATCC 33889 / DSM 1251)).